Here is a 557-residue protein sequence, read N- to C-terminus: Copine-4 (557 aa).

C2 domains lie at 3–131 (KMSN…SKSL) and 137–264 (TAGK…VQWE). Residues Asp-170, Asp-176, Asp-232, Asp-234, and Asp-240 each contribute to the Ca(2+) site. One can recognise a VWFA domain in the interval 305–507 (QIQFTVAIDF…VLRDIVQFVP (203 aa)).

Belongs to the copine family. As to quaternary structure, interacts (via VWFA domain) with ACTB, BCOR, BICD2, CCDC22, CDC42BPB, CEP162, MYCBP2, NONO, PDCD6, PITPNM2, RDX, SKIL, SKT, SPTBN1, UBE2O and WTAP. Ca(2+) serves as cofactor.

In terms of biological role, probable calcium-dependent phospholipid-binding protein that may play a role in calcium-mediated intracellular processes. This Mus musculus (Mouse) protein is Copine-4.